The following is a 518-amino-acid chain: Envelope protein (518 aa).

An N-terminal signal peptide occupies residues 1 to 31 (MSVNRSSIKSLLMVFMIVSSSLLAPVGGAAA). The Extracellular segment spans residues 32–485 (DEFRTPAASD…IEDREPEAGG (454 aa)). Asn213 carries an N-linked (GlcNAc...) (hybrid) asparagine; by host glycan. Residues 486–506 (FFGSGSTDTMLVGLLALAGVL) form a helical membrane-spanning segment. At 507 to 518 (LLAQSNNRGGRR) the chain is on the cytoplasmic side.

Post-translationally, N-glycosylated by a pentasaccharide comprising glucose, glucuronic acid and a terminal 5-N-formyl-legionaminic acid residue.

The protein resides in the virion membrane. Its function is as follows. Envelope protein that may play a role in host-cell attachment and viral genome entry. The sequence is that of Envelope protein from Halorubrum sp. PV6 (HRPV-1).